The chain runs to 294 residues: Cytidine deaminase (294 aa).

2 consecutive CMP/dCMP-type deaminase domains span residues 48–168 (DEDA…FGPK) and 186–294 (LTGD…VLLG). 89 to 91 (NME) contributes to the substrate binding site. Position 102 (His102) interacts with Zn(2+). Glu104 acts as the Proton donor in catalysis. Residues Cys129 and Cys132 each contribute to the Zn(2+) site.

It belongs to the cytidine and deoxycytidylate deaminase family. In terms of assembly, homodimer. It depends on Zn(2+) as a cofactor.

The catalysed reaction is cytidine + H2O + H(+) = uridine + NH4(+). The enzyme catalyses 2'-deoxycytidine + H2O + H(+) = 2'-deoxyuridine + NH4(+). This enzyme scavenges exogenous and endogenous cytidine and 2'-deoxycytidine for UMP synthesis. This chain is Cytidine deaminase, found in Salmonella enteritidis PT4 (strain P125109).